The following is a 431-amino-acid chain: 3'3'-cGAMP-specific phosphodiesterase 1 (431 aa).

The 117-residue stretch at Asp-39–Leu-155 folds into the HD domain. Residues Gly-231–Pro-427 enclose the HD-GYP domain. A divalent metal cation-binding residues include His-288 and Asp-289. Lys-292 functions as the Proton donor in the catalytic mechanism. A divalent metal cation contacts are provided by His-317, His-341, His-342, and Asp-370.

Monomer. Ca(2+) is required as a cofactor. It depends on Mg(2+) as a cofactor.

The catalysed reaction is 3',3'-cGAMP + H2O = 5'-pApG-3' + H(+). The enzyme catalyses 5'-pApG-3' + H2O = 5'-ApG-3' + phosphate. In terms of biological role, phosphodiesterase (PDE) that catalyzes the hydrolysis of 3'3'-cyclic GMP-AMP (3'3'-cGAMP), leading to linear 5'-pApG. Also displays 5'-nucleotidase activity, further hydrolyzing 5'-pApG to 5'-ApG. Counteracts the function of the 3'3'-cGAMP synthase DncV, and is involved in the modulation of intracellular 3'3'-cGAMP levels. Enhances bacterial chemotaxis and inhibits intestinal colonization in vivo. Thus exerts a crucial role in regulating bacterial infectivity through catalyzing 3'3'-cGAMP degradation. Is specific for 3'3'-cGAMP since it cannot degrade other cGAMP linkage isomers (3'2'-, 2'3'-, and 2'2'-cGAMPs). Is also able to hydrolyze c-di-GMP but not c-di-AMP. This chain is 3'3'-cGAMP-specific phosphodiesterase 1, found in Vibrio cholerae serotype O1 (strain ATCC 39315 / El Tor Inaba N16961).